We begin with the raw amino-acid sequence, 739 residues long: Catalase-peroxidase (739 aa).

The tryptophyl-tyrosyl-methioninium (Trp-Tyr) (with M-253) cross-link spans 99–227 (WHSAGTYRMG…LAAVQMGLIY (129 aa)). Residue H100 is the Proton acceptor of the active site. Residues 227-253 (YVNPEGPDGNPDPVASGRDVRETFARM) constitute a cross-link (tryptophyl-tyrosyl-methioninium (Tyr-Met) (with W-99)). H268 contributes to the heme b binding site.

It belongs to the peroxidase family. Peroxidase/catalase subfamily. As to quaternary structure, homodimer or homotetramer. The cofactor is heme b. Formation of the three residue Trp-Tyr-Met cross-link is important for the catalase, but not the peroxidase activity of the enzyme.

It catalyses the reaction H2O2 + AH2 = A + 2 H2O. It carries out the reaction 2 H2O2 = O2 + 2 H2O. In terms of biological role, bifunctional enzyme with both catalase and broad-spectrum peroxidase activity. The polypeptide is Catalase-peroxidase (Syntrophotalea carbinolica (strain DSM 2380 / NBRC 103641 / GraBd1) (Pelobacter carbinolicus)).